We begin with the raw amino-acid sequence, 875 residues long: Ectonucleotide pyrophosphatase/phosphodiesterase family member 3 (875 aa).

At 1-11 (MDSRLALATEE) the chain is on the cytoplasmic side. A helical; Signal-anchor for type II membrane protein transmembrane segment spans residues 12 to 30 (PIKKDSLKRYKILCAVLLA). At 31 to 875 (LLVIVSLGLG…TYLPTFETII (845 aa)) the chain is on the extracellular side. SMB domains follow at residues 51–94 (HIGS…VKST) and 95–139 (QIWT…GEVP). 10 cysteine pairs are disulfide-bonded: Cys-55–Cys-72, Cys-59–Cys-90, Cys-70–Cys-83, Cys-76–Cys-82, Cys-99–Cys-116, Cys-104–Cys-134, Cys-114–Cys-127, Cys-120–Cys-126, Cys-145–Cys-191, and Cys-153–Cys-365. A Cell attachment site motif is present at residues 79–81 (RGD). The segment at 161-545 (PVILFSMDGF…HGSLNHLLKA (385 aa)) is phosphodiesterase. Position 168 (Asp-168) interacts with Zn(2+). Lys-205 lines the ATP pocket. Thr-206 contacts Zn(2+). Thr-206 (nucleophile) is an active-site residue. Asn-227 contributes to the ATP binding site. An N-linked (GlcNAc...) asparagine glycan is attached at Asn-237. An ATP-binding site is contributed by Asp-276. 2 N-linked (GlcNAc...) asparagine glycosylation sites follow: Asn-280 and Asn-289. Tyr-290 is an ATP binding site. Asp-326, His-330, Asp-373, and His-374 together coordinate Zn(2+). 6 disulfide bridges follow: Cys-381–Cys-478, Cys-429–Cys-818, Cys-562–Cys-623, Cys-575–Cys-679, Cys-577–Cys-664, and Cys-787–Cys-797. Residue His-483 coordinates Zn(2+). N-linked (GlcNAc...) asparagine glycans are attached at residues Asn-533, Asn-574, Asn-594, and Asn-702. A nuclease region spans residues 582–875 (TSGQEEQVNQ…TYLPTFETII (294 aa)). The Ca(2+) site is built by Asp-752, Asn-754, Asp-756, His-758, and Asp-760. A glycan (N-linked (GlcNAc...) asparagine) is linked at Asn-789.

It belongs to the nucleotide pyrophosphatase/phosphodiesterase family. In terms of assembly, monomer and homodimer. Zn(2+) serves as cofactor. In terms of processing, the N-terminal is blocked. Post-translationally, N-glycosylated. N-glycosylation is necessary for normal transport to the cell membrane, but is not the apical targeting signal. In terms of tissue distribution, detected in intestinal epithelium and liver (at protein level).

It localises to the cell membrane. The protein localises to the apical cell membrane. The protein resides in the secreted. It catalyses the reaction Hydrolytically removes 5'-nucleotides successively from the 3'-hydroxy termini of 3'-hydroxy-terminated oligonucleotides.. The catalysed reaction is a ribonucleoside 5'-triphosphate + H2O = a ribonucleoside 5'-phosphate + diphosphate + H(+). It carries out the reaction ATP + H2O = AMP + diphosphate + H(+). The enzyme catalyses CTP + H2O = CMP + diphosphate + H(+). It catalyses the reaction GTP + H2O = GMP + diphosphate + H(+). The catalysed reaction is UTP + H2O = UMP + diphosphate + H(+). It carries out the reaction UDP-N-acetyl-alpha-D-glucosamine + H2O = N-acetyl-alpha-D-glucosamine 1-phosphate + UMP + 2 H(+). The enzyme catalyses P(1),P(3)-bis(5'-adenosyl) triphosphate + H2O = AMP + ADP + 2 H(+). It catalyses the reaction P(1),P(4)-bis(5'-adenosyl) tetraphosphate + H2O = AMP + ATP + 2 H(+). The catalysed reaction is P(1),P(5)-bis(5'-adenosyl) pentaphosphate + H2O = adenosine 5'-tetraphosphate + AMP + 2 H(+). It carries out the reaction P(1),P(4)-bis(5'-guanosyl) tetraphosphate + H2O = GMP + GTP + 2 H(+). In terms of biological role, hydrolase that metabolizes extracellular nucleotides, including ATP, GTP, UTP and CTP. Limits mast cells and basophils response during inflammation and during the chronic phases of allergic responses by eliminating extracellular ATP, a signaling molecule activating these cells in an autocrine manner. Metabolizes extracellular ATP in the lumen of the small intestine, and thereby prevents ATP-induced apoptosis of intestinal plasmacytoid dendritic cells. Has a broad specificity and can also hydrolyze UDP-GlcNAc into UMP and GlcNAc-1-phosphate and potentially several other intracellular nucleotide sugars, including UDP-GalNAc, CMP-NeuAc, GDP-Fuc, and UDP-GlcA. Thereby, could modulate glycan biosynthesis and protein glycosylation. Can hydrolyze extracellular dinucleoside polyphosphates, including the vasoactive adenosine polyphosphates as well. In addition, displays an alkaline phosphodiesterase activity in vitro. This chain is Ectonucleotide pyrophosphatase/phosphodiesterase family member 3, found in Rattus norvegicus (Rat).